We begin with the raw amino-acid sequence, 248 residues long: Small ribosomal subunit protein uS3 (248 aa).

One can recognise a KH type-2 domain in the interval 39 to 107 (IRQMLLKQLK…EVFINIVEIR (69 aa)). A disordered region spans residues 214 to 248 (AVDKRMTAESEGPSSGRPPRRDRDRDRDRDRDSAA). Basic and acidic residues predominate over residues 232–248 (PRRDRDRDRDRDRDSAA).

Belongs to the universal ribosomal protein uS3 family. As to quaternary structure, part of the 30S ribosomal subunit. Forms a tight complex with proteins S10 and S14.

Its function is as follows. Binds the lower part of the 30S subunit head. Binds mRNA in the 70S ribosome, positioning it for translation. The chain is Small ribosomal subunit protein uS3 from Azorhizobium caulinodans (strain ATCC 43989 / DSM 5975 / JCM 20966 / LMG 6465 / NBRC 14845 / NCIMB 13405 / ORS 571).